The primary structure comprises 324 residues: Pancreas transcription factor 1 subunit alpha (324 aa).

The bHLH domain maps to 160–212 (QLRQAANVRERRRMQSINDAFEGLRSHIPTLPYEKRLSKVDTLRLAIGYINFL). Residues 302 to 324 (DPRKLNSKSFDNIENEPPFEFVS) are disordered.

As to quaternary structure, component of the pancreas transcription factor 1 complex (PTF1) which is composed of TCF3/p75, TCF12/p64 and PTF1A/p48. TCF3 is responsible for the nuclear import of the p48/p64 complex. Interacts with TCF3 and RBPSUH/RBP-Jkappa. As to expression, expressed in precursors of pancreatic islets, acini and ducts.

The protein localises to the nucleus. It is found in the cytoplasm. In terms of biological role, transcription factor implicated in the cell fate determination in various organs. Binds to the E-box consensus sequence 5'-CANNTG-3'. Plays a role in early and late pancreas development and differentiation. Important for determining whether cells allocated to the pancreatic buds continue towards pancreatic organogenesis or revert back to duodenal fates. May be involved in the maintenance of exocrine pancreas-specific gene expression including ELA1 and amylase. Required for the formation of pancreatic acinar and ductal cells. Plays an important role in cerebellar development. Directly regulated by FOXN4 and RORC during retinal development, FOXN4-PTF1A pathway plays a central role in directing the differentiation of retinal progenitors towards horizontal and amacrine fates. In Mus musculus (Mouse), this protein is Pancreas transcription factor 1 subunit alpha (Ptf1a).